Here is a 244-residue protein sequence, read N- to C-terminus: Type III pantothenate kinase (244 aa).

8 to 15 (DQGNSACK) contributes to the ATP binding site. 94-97 (GADR) contacts substrate. Residue Asp-96 is the Proton acceptor of the active site. Asp-117 provides a ligand contact to K(+). Thr-120 contributes to the ATP binding site. Thr-175 serves as a coordination point for substrate.

It belongs to the type III pantothenate kinase family. In terms of assembly, homodimer. NH4(+) is required as a cofactor. Requires K(+) as cofactor.

It localises to the cytoplasm. The enzyme catalyses (R)-pantothenate + ATP = (R)-4'-phosphopantothenate + ADP + H(+). The protein operates within cofactor biosynthesis; coenzyme A biosynthesis; CoA from (R)-pantothenate: step 1/5. Catalyzes the phosphorylation of pantothenate (Pan), the first step in CoA biosynthesis. This is Type III pantothenate kinase from Porphyromonas gingivalis (strain ATCC 33277 / DSM 20709 / CIP 103683 / JCM 12257 / NCTC 11834 / 2561).